A 223-amino-acid chain; its full sequence is Cytidine deaminase 3 (223 aa).

CMP/dCMP-type deaminase domains are found at residues 21–154 (TEPM…FSPD) and 184–223 (SDCS…WYRG). A substrate-binding site is contributed by 62-64 (NVE). His75 is a Zn(2+) binding site. Glu77 acts as the Proton donor in catalysis. Residues Cys110 and Cys113 each contribute to the Zn(2+) site.

It belongs to the cytidine and deoxycytidylate deaminase family. As to quaternary structure, homodimer. Zn(2+) serves as cofactor.

It carries out the reaction cytidine + H2O + H(+) = uridine + NH4(+). The catalysed reaction is 2'-deoxycytidine + H2O + H(+) = 2'-deoxyuridine + NH4(+). Functionally, this enzyme scavenges exogenous and endogenous cytidine and 2'-deoxycytidine for UMP synthesis. The protein is Cytidine deaminase 3 (CDA3) of Arabidopsis thaliana (Mouse-ear cress).